We begin with the raw amino-acid sequence, 591 residues long: Aspartate--tRNA(Asp/Asn) ligase (591 aa).

L-aspartate is bound at residue Glu174. An aspartate region spans residues 198 to 201 (QLFK). Arg220 is a binding site for L-aspartate. Residues 220 to 222 (RDE) and Gln229 contribute to the ATP site. His450 contacts L-aspartate. ATP is bound at residue Glu483. Arg490 is an L-aspartate binding site. 535-538 (GLDR) provides a ligand contact to ATP.

The protein belongs to the class-II aminoacyl-tRNA synthetase family. Type 1 subfamily. Homodimer.

It localises to the cytoplasm. It catalyses the reaction tRNA(Asx) + L-aspartate + ATP = L-aspartyl-tRNA(Asx) + AMP + diphosphate. Aspartyl-tRNA synthetase with relaxed tRNA specificity since it is able to aspartylate not only its cognate tRNA(Asp) but also tRNA(Asn). Reaction proceeds in two steps: L-aspartate is first activated by ATP to form Asp-AMP and then transferred to the acceptor end of tRNA(Asp/Asn). In Pseudomonas fluorescens (strain Pf0-1), this protein is Aspartate--tRNA(Asp/Asn) ligase.